Reading from the N-terminus, the 620-residue chain is MEAPICLVENWKNQLTVNLEAIRILEQIAQPLVVVAIVGLYRTGKSYLMNRLAGRNHGFSLGSTVQSETKGIWMWCVPHPTKPTHTLVLLDTEGLGDVEKGDPKNDSWIFALAVLLSSTFVYNSMSTINQQALEQLHFVTELTQLIRAKSSPREDKVKDSSEFVGFFPDFIWAVRDFALELKLNGRPITEDEYLENALKLIQGDNLKVQQSNMTRECIRYFFPVRKCFVFDRPTSDKRLLLQIENVPENQLERNFQVESEKFCSYIFTNGKTKTLRGGVIVTGNRLGTLVQTYVNAINSGTVPCLENAVTTLAQRENSIAVQKAADHYSEQMAQRMRLPTDTLQELLTVHAACEKEAIAVFMEHSFKDDEQEFQKKLVVTIEERKEEFIRQNEAASIRHCQAELERLSESLRKSISCGAFSVPGGHSLYLEARKKIELGYQQVLRKGVKAKEVLKSFLQSQAIMEDSILQSDKALTDGERAIAAERTKKEVAEKELELLRQRQKEQEQVMEAQERSFRENIAKLQEKMESEKEMLLREQEKMLEHKLKVQEELLIEGFREKSDMLKNEISHLREEMERTRRKPSLFGQILDTIGNAFIMILPGAGKLFGVGLKFLGSLSS.

Residues 1–304 (MEAPICLVEN…NAINSGTVPC (304 aa)) form a GTPase domain (Globular) region. Residues 29–271 (AQPLVVVAIV…FCSYIFTNGK (243 aa)) enclose the GB1/RHD3-type G domain. GTP-binding positions include 39–46 (GLYRTGKS), 61–63 (LGS), and 91–95 (DTEGL). Coiled-coil stretches lie at residues 375 to 411 (KKLV…SESL) and 477 to 582 (DGER…TRRK).

This sequence belongs to the TRAFAC class dynamin-like GTPase superfamily. GB1/RHD3 GTPase family. GB1 subfamily. Heterodimer with other family members, including GBP1, GBP2 and GBP5. Dimerization regulates subcellular location. Brain, lung, heart, spleen, kidney, liver and intestine.

The protein resides in the cytoplasm. The protein localises to the perinuclear region. It is found in the golgi apparatus membrane. The enzyme catalyses GTP + H2O = GDP + phosphate + H(+). Interferon (IFN)-inducible GTPase that plays important roles in innate immunity against a diverse range of bacterial, viral and protozoan pathogens. Hydrolyzes GTP very efficiently; GDP rather than GMP is the major reaction product. Following infection, recruited to the pathogen-containing vacuoles or vacuole-escaped bacteria and acts as a positive regulator of inflammasome assembly by promoting the release of inflammasome ligands from bacteria. Acts by promoting lysis of pathogen-containing vacuoles, releasing pathogens into the cytosol. Following pathogen release in the cytosol, promotes recruitment of proteins that mediate bacterial cytolysis, such as Gm12250/Irgb10: this liberates ligands that are detected by inflammasomes, such as lipopolysaccharide (LPS) that activates the non-canonical CASP4/CASP11 inflammasome or double-stranded DNA (dsDNA) that activates the AIM2 inflammasome. May play a role in erythroid differentiation. The sequence is that of Guanylate-binding protein 3 from Mus musculus (Mouse).